Reading from the N-terminus, the 299-residue chain is Probable GTP 3',8-cyclase (299 aa).

Residues 4 to 229 (LHNREIKSLR…MQNRKKYLVD (226 aa)) enclose the Radical SAM core domain. R13 provides a ligand contact to GTP. Residues C20 and C24 each contribute to the [4Fe-4S] cluster site. Residue Y26 participates in S-adenosyl-L-methionine binding. A [4Fe-4S] cluster-binding site is contributed by C27. Residue K61 coordinates GTP. Residue G65 coordinates S-adenosyl-L-methionine. Position 94 (T94) interacts with GTP. An S-adenosyl-L-methionine-binding site is contributed by S118. K154 is a GTP binding site. C245 and C248 together coordinate [4Fe-4S] cluster. 250–252 (RIR) provides a ligand contact to GTP. C262 lines the [4Fe-4S] cluster pocket.

Belongs to the radical SAM superfamily. MoaA family. [4Fe-4S] cluster serves as cofactor.

The catalysed reaction is GTP + AH2 + S-adenosyl-L-methionine = (8S)-3',8-cyclo-7,8-dihydroguanosine 5'-triphosphate + 5'-deoxyadenosine + L-methionine + A + H(+). The protein operates within cofactor biosynthesis; molybdopterin biosynthesis. Its function is as follows. Catalyzes the cyclization of GTP to (8S)-3',8-cyclo-7,8-dihydroguanosine 5'-triphosphate. This Methanococcus aeolicus (strain ATCC BAA-1280 / DSM 17508 / OCM 812 / Nankai-3) protein is Probable GTP 3',8-cyclase.